A 539-amino-acid polypeptide reads, in one-letter code: Glutathione synthetase, chloroplastic (539 aa).

The transit peptide at Met1–Lys61 directs the protein to the chloroplast. A substrate-binding site is contributed by Arg193. Position 209 (Glu209) interacts with ATP. 2 residues coordinate Mg(2+): Glu209 and Asn211. Substrate contacts are provided by residues Ile213–Ser216, Glu281–Asn283, Gln287, and Arg335–Tyr338. Residues Lys374, Lys428–Asn437, Tyr439, Met464–Ile467, and Glu490 each bind ATP. Glu432 contacts Mg(2+). Position 515 (Arg515) interacts with substrate. The ATP site is built by Lys517 and Glu523. Residue Val526–Ala527 participates in substrate binding.

It belongs to the eukaryotic GSH synthase family. Homodimer. The cofactor is Mg(2+).

The protein localises to the plastid. Its subcellular location is the chloroplast. It catalyses the reaction gamma-L-glutamyl-L-cysteine + glycine + ATP = glutathione + ADP + phosphate + H(+). It functions in the pathway sulfur metabolism; glutathione biosynthesis; glutathione from L-cysteine and L-glutamate: step 2/2. The polypeptide is Glutathione synthetase, chloroplastic (GSH2) (Arabidopsis thaliana (Mouse-ear cress)).